Consider the following 438-residue polypeptide: Aspartate--tRNA(Asp/Asn) ligase (438 aa).

Glu-176 serves as a coordination point for L-aspartate. An aspartate region spans residues 198–201 (QLYK). Arg-220 contacts L-aspartate. ATP is bound by residues 220 to 222 (RAE), 228 to 230 (RHL), and Glu-361. Mg(2+) is bound by residues Glu-361 and Ser-364. 2 residues coordinate L-aspartate: Ser-364 and Arg-368. 409 to 412 (GADR) is an ATP binding site.

Belongs to the class-II aminoacyl-tRNA synthetase family. Type 2 subfamily. In terms of assembly, homodimer. The cofactor is Mg(2+).

The protein resides in the cytoplasm. The enzyme catalyses tRNA(Asx) + L-aspartate + ATP = L-aspartyl-tRNA(Asx) + AMP + diphosphate. Functionally, aspartyl-tRNA synthetase with relaxed tRNA specificity since it is able to aspartylate not only its cognate tRNA(Asp) but also tRNA(Asn). Reaction proceeds in two steps: L-aspartate is first activated by ATP to form Asp-AMP and then transferred to the acceptor end of tRNA(Asp/Asn). In Methanococcus maripaludis (strain C6 / ATCC BAA-1332), this protein is Aspartate--tRNA(Asp/Asn) ligase.